Reading from the N-terminus, the 85-residue chain is MKVLLVTGVLGLLLLIKWKSQSTSTSNQTCQCPTSPWVIYAFYNSLSLVLLLCHLIPEIKPIHTSYNTHDSSKQQHISINTGNGK.

Residues 1–2 (MK) are Lumenal-facing. The helical transmembrane segment at 3–23 (VLLVTGVLGLLLLIKWKSQST) threads the bilayer. The Cytoplasmic segment spans residues 24 to 36 (STSNQTCQCPTSP). A helical transmembrane segment spans residues 37–56 (WVIYAFYNSLSLVLLLCHLI). Over 57 to 85 (PEIKPIHTSYNTHDSSKQQHISINTGNGK) the chain is Lumenal.

This sequence belongs to the carmovirus double gene block protein 2 family.

The protein localises to the host endoplasmic reticulum membrane. Its function is as follows. Cell-to-cell movement function. The polypeptide is Double gene block protein 2 (Turnip crinkle virus (TCV)).